The chain runs to 225 residues: Insulin-induced gene 2 protein (225 aa).

Residues 1-28 (MAEGETESPGPKKCGPYISSVTSQSVNL) are Cytoplasmic-facing. Residues 29–51 (MIRGVVLFFIGVFLALVLNLLQI) form a helical membrane-spanning segment. At 52–70 (QRNVTLFPPDVIASIFSSA) the chain is on the lumenal side. The helical transmembrane segment at 71–88 (WWVPPCCGTASAVIGLLY) threads the bilayer. The Cytoplasmic segment spans residues 89 to 103 (PCIDRHLGEPHKFKR). Residues 104–126 (EWSSVMRCVAVFVGINHASAKVD) form a helical membrane-spanning segment. The Lumenal portion of the chain corresponds to 127 to 129 (FDN). Residues 130-148 (NIQLSLTLAALSIGLWWTF) traverse the membrane as a helical segment. Residues 149 to 153 (DRSRS) lie on the Cytoplasmic side of the membrane. The residue at position 151 (serine 151) is a Phosphoserine. Residues 154–175 (GFGLGVGIAFLATLVTQLLVYN) traverse the membrane as a helical segment. Topologically, residues 176–189 (GVYQYTSPDFLYVR) are lumenal. A helical transmembrane segment spans residues 190 to 207 (SWLPCIFFAGGITMGNIG). At 208-225 (RQLAMYECKVIAEKSHQE) the chain is on the cytoplasmic side. Residue cysteine 215 is modified to Cysteine sulfenic acid (-SOH); alternate. A Glycyl cysteine thioester (Cys-Gly) (interchain with G-Cter in ubiquitin); alternate cross-link involves residue cysteine 215. A KxHxx motif is present at residues 219–225 (AEKSHQE).

It belongs to the INSIG family. As to quaternary structure, interacts with SCAP; interaction is direct and only takes place in the presence of sterols; it prevents interaction between SCAP and the coat protein complex II (COPII). Associates with the SCAP-SREBP complex (composed of SCAP and SREBF1/SREBP1 or SREBF2/SREBP2); association is mediated via its interaction with SCAP and only takes place in the presence of sterols. Interacts with RNF139. Interacts with RNF145. Post-translationally, phosphorylation at Ser-151 by PCK1 reduces binding to oxysterol, disrupting the interaction between INSIG2 and SCAP, thereby promoting nuclear translocation of SREBP proteins (SREBF1/SREBP1 or SREBF2/SREBP2) and subsequent transcription of downstream lipogenesis-related genes. Polyubiquitinated by AMFR/gp78 at Cys-215 in some tissues such as adipose tissues, undifferentiated myoblasts and liver, leading to its degradation. In differentiated myotubes, Cys-215 oxidation prevents ubiquitination at the same site, resulting in protein stabilization. In terms of processing, oxidized at Cys-215 in differentiated myotubes, preventing ubiquitination at the same site, and resulting in protein stabilization.

The protein localises to the endoplasmic reticulum membrane. Functionally, oxysterol-binding protein that mediates feedback control of cholesterol synthesis by controlling both endoplasmic reticulum to Golgi transport of SCAP and degradation of HMGCR. Acts as a negative regulator of cholesterol biosynthesis by mediating the retention of the SCAP-SREBP complex in the endoplasmic reticulum, thereby blocking the processing of sterol regulatory element-binding proteins (SREBPs) SREBF1/SREBP1 and SREBF2/SREBP2. Binds oxysterol, including 22-hydroxycholesterol, 24-hydroxycholesterol, 25-hydroxycholesterol and 27-hydroxycholesterol, regulating interaction with SCAP and retention of the SCAP-SREBP complex in the endoplasmic reticulum. In presence of oxysterol, interacts with SCAP, retaining the SCAP-SREBP complex in the endoplasmic reticulum, thereby preventing SCAP from escorting SREBF1/SREBP1 and SREBF2/SREBP2 to the Golgi. Sterol deprivation or phosphorylation by PCK1 reduce oxysterol-binding, disrupting the interaction between INSIG2 and SCAP, thereby promoting Golgi transport of the SCAP-SREBP complex, followed by processing and nuclear translocation of SREBF1/SREBP1 and SREBF2/SREBP2. Also regulates cholesterol synthesis by regulating degradation of HMGCR: initiates the sterol-mediated ubiquitin-mediated endoplasmic reticulum-associated degradation (ERAD) of HMGCR via recruitment of the reductase to the ubiquitin ligase RNF139. This is Insulin-induced gene 2 protein from Papio anubis (Olive baboon).